The sequence spans 433 residues: Enolase (433 aa).

Residue glutamine 163 coordinates (2R)-2-phosphoglycerate. Glutamate 205 acts as the Proton donor in catalysis. Aspartate 242, glutamate 285, and aspartate 312 together coordinate Mg(2+). (2R)-2-phosphoglycerate-binding residues include lysine 337, arginine 366, serine 367, and lysine 388. Residue lysine 337 is the Proton acceptor of the active site.

It belongs to the enolase family. The cofactor is Mg(2+).

Its subcellular location is the cytoplasm. It localises to the secreted. The protein localises to the cell surface. The catalysed reaction is (2R)-2-phosphoglycerate = phosphoenolpyruvate + H2O. The protein operates within carbohydrate degradation; glycolysis; pyruvate from D-glyceraldehyde 3-phosphate: step 4/5. Functionally, catalyzes the reversible conversion of 2-phosphoglycerate (2-PG) into phosphoenolpyruvate (PEP). It is essential for the degradation of carbohydrates via glycolysis. This is Enolase from Lawsonia intracellularis (strain PHE/MN1-00).